The sequence spans 1322 residues: MKEDKVLILRTCANNMADHGGIIWPLSGIVECKYWKPVKGFENGLTGLIWGKGSDSPLSLHADARRVVAEVAADECIAIETHGWIKFPRAEVLHVGTQNSAMQFILHHRADYVACTEMQAGPGGPDVTSEAKAGNRSLPVTDDIDATIESGSTQPTQTIEIATYGSTLSGTHQSQLIAGYGSTETAGDSSTLIAGYGSTGTAGSDSTLVAGYGSTQTAGEESSQMAGYGSTQTGMKGSDLTAGYGSTGTAGADSSLIAGYGSTQTAGEDNSLTAGYGSTQTAGEDSSLTAGYGSTQTAQKGSDLTAGYGSTGTAGADSSLIAGYGSTQTAGEESTQTAGYGSTQTAQKGSDLTAGYGSTGTAGDDSSLIAGYGSTQTAGEDSSLTAGYGSTQTAQKGSDLTAGYGSTGTSGADSSLIAGYGSTQTAGEESTQTAGYGSTQTAQKGSDLTAGYGSTGTAGDDSSLIAGYGSTQTAQKGSDLTAGYGSTSTAGYESSLIAGYGSTQTAGYGSTLTAGYGSTQTAQNESDLITGYGSTSTAGANSSLIAGYGSTQTASYNSVLTAGYGSTQTAREGSDLTAGYGSTGTAGSDSSIIAGYGSTSTAGADSSLIAGYGSTQTAGYNSILTAGYGSTQTAEEGSDLTAGYGSTSTAGADSSLIAGYGSTQTAGYNSILTAGYGSTQTAQEGSDLTAGYGSTSTAGADSSLIAGYGSTQTASYHSSLTAGYGSTQTAQEQSVLTTGYGSTSTAGADSSLIAGYGSTQTAGYNSILTAGYGSTQTAQERSDLTTGYGSTSTAGADSSLIAGYGSTQTAGYHSILTAGYGSTQTAQERSDLTTGYGSTSTAGADSSLIAGYGSTQTAGYNSILTAGYGSTQTAQENSDLTTGYGSTSTAGYDSSLIAGYGSTQTAGYHSILTAGYGSTQTARTRSDLTTGYGSTSTAGPDSSLIAGYGSTQTAGYNSILTAGYGSTQTGQENSDLTTGYGSTSTAGYESSLIAGYGSTQTASFKSTLMAGYGSSQTAREQSSLTAGYGSTSMAGYDSSLIAGYGSTQTAGYQSTLTAGYGSTQTAEHSSTLTAGYGSTATAGADSSLIAGYGSSLTSGIRSFLTAGYGSTLISGLRSVLTAGYGSSLISGRRSSLTAGYGSNQIASHRSSLIAGPESTQITGNRSMLIAGKGSSQTAGYRSTLISGADSVQMAGERGKLIAGADSTQTAGDRSKLLAGNNSYLTAGDRSKLTAGNDCILMAGDRSKLTAGINSILTAGCRSKLIGSNGSTLTAGENSVLIFRCWDGKRYTNVVAKTGKGGIEADMPYQMDEDNNIVNKPEE.

An octapeptide periodicity region spans residues 162–1281 (ATYGSTLSGT…LTAGENSVLI (1120 aa)). 4 stretches are compositionally biased toward polar residues: residues 271–302 (SLTA…QKGS), 327–350 (TQTA…QKGS), 373–398 (GSTQ…QKGS), and 423–446 (TQTA…QKGS). Disordered regions lie at residues 271–303 (SLTA…KGSD), 327–358 (TQTA…GYGS), 372–399 (YGST…KGSD), and 423–448 (TQTA…GSDL).

This sequence belongs to the bacterial ice nucleation protein family.

It localises to the cell outer membrane. Ice nucleation proteins enable bacteria to nucleate crystallization in supercooled water. The chain is Ice nucleation protein InaA (inaA) from Pantoea ananas (Erwinia uredovora).